We begin with the raw amino-acid sequence, 650 residues long: Secretin OutD (650 aa).

An N-terminal signal peptide occupies residues Met-1–Ser-18. The segment at Glu-20 to Gly-115 is N0. The segment at Glu-117–Gly-181 is N1. An N2 region spans residues Asp-182–Ala-255. The segment at Gly-258 to Asp-330 is N3. The interval Gln-335–Asp-585 is secretin. The segment at Ser-587 to Lys-650 is s domain.

It belongs to the bacterial secretin family. GSP D subfamily. In terms of assembly, forms a cylindrical channel with 15 subunits.

Its subcellular location is the cell outer membrane. Its function is as follows. Involved in a type II secretion system (T2SS, formerly general secretion pathway, GSP) for the export of proteins. Required for the translocation of the multiple pectic enzymes. This subunit forms the outer membrane channel. This is Secretin OutD (outD) from Pectobacterium carotovorum subsp. carotovorum (Erwinia carotovora subsp. carotovora).